We begin with the raw amino-acid sequence, 1603 residues long: Transcription factor Gibbin (1603 aa).

Disordered regions lie at residues 19–108 (PDYL…SSSR), 150–236 (LRLS…STDY), 264–285 (LEPP…FLDP), and 394–467 (CRRR…RKGK). Residues 30–47 (GGPPTPRPLLPTRPPASP) show a composition bias toward pro residues. N6-acetyllysine is present on lysine 79. Residues 166 to 178 (SFFSSPSLANSIR) show a composition bias toward polar residues. Positions 179–194 (SPEERATPHAKSERPS) are enriched in basic and acidic residues. A compositionally biased stretch (low complexity) spans 216 to 225 (PGATAAATGL). Serine 268 carries the post-translational modification Phosphoserine. Residues 273–285 (PQLLDPQPRFLDP) are compositionally biased toward low complexity. Residues 396–408 (RRKAGRGRKADAG) constitute a DNA-binding region (a.T hook 1). Residues 428-446 (EPPPPPPPPPPALPGPGPV) are compositionally biased toward pro residues. Positions 544–556 (KRKRGRPPKNLLL) form a DNA-binding region, a.T hook 2. Residues 581-607 (MPEVKKRRRRKQKLASPQPSYAADAND) form a disordered region. At serine 596 the chain carries Phosphoserine. Lysine 609 participates in a covalent cross-link: Glycyl lysine isopeptide (Lys-Gly) (interchain with G-Cter in SUMO2). Disordered stretches follow at residues 717–792 (LTEL…RNCG) and 806–827 (LESG…GQTE). Positions 737–746 (KPKRKRRSRK) are enriched in basic residues. A compositionally biased stretch (polar residues) spans 816–827 (YYSTGAPSGQTE). Serine 829 and serine 846 each carry phosphoserine. Arginine 891 is modified (omega-N-methylarginine). A phosphoserine mark is found at serine 896 and serine 1064. Disordered regions lie at residues 1159 to 1198 (VSET…QSSL) and 1253 to 1286 (ASAA…KKER). Low complexity-rich tracts occupy residues 1160-1171 (SETFSESSSDST) and 1187-1198 (SEASSSEGQSSL). At serine 1187 the chain carries Phosphoserine. A phosphoserine mark is found at serine 1322, serine 1324, and serine 1399. Threonine 1401 is modified (phosphothreonine). A Phosphoserine modification is found at serine 1403. A Glycyl lysine isopeptide (Lys-Gly) (interchain with G-Cter in SUMO2) cross-link involves residue lysine 1409. Positions 1503–1533 (PHLASPPATPKADKEPLEMARPPGPPRGPAA) are disordered. Phosphoserine occurs at positions 1507 and 1549.

It is found in the nucleus. Its subcellular location is the chromosome. Functionally, transcription factor required for the proper patterning of the epidermis, which plays a key role in early epithelial morphogenesis. Directly binds promoter and enhancer regions and acts by maintaining local enhancer-promoter chromatin architecture. Interacts with many sequence-specific zinc-finger transcription factors and methyl-CpG-binding proteins to regulate the expression of mesoderm genes that wire surface ectoderm stratification. This is Transcription factor Gibbin from Homo sapiens (Human).